The primary structure comprises 206 residues: Histidine biosynthesis bifunctional protein HisIE (206 aa).

The phosphoribosyl-AMP cyclohydrolase stretch occupies residues 1 to 117 (MGSETTAAGD…SCFPTAPSQF (117 aa)). The phosphoribosyl-ATP pyrophosphohydrolase stretch occupies residues 118 to 206 (LGSLDALIAE…AVALLESRHK (89 aa)).

This sequence in the N-terminal section; belongs to the PRA-CH family. The protein in the C-terminal section; belongs to the PRA-PH family.

The protein resides in the cytoplasm. The enzyme catalyses 1-(5-phospho-beta-D-ribosyl)-ATP + H2O = 1-(5-phospho-beta-D-ribosyl)-5'-AMP + diphosphate + H(+). The catalysed reaction is 1-(5-phospho-beta-D-ribosyl)-5'-AMP + H2O = 1-(5-phospho-beta-D-ribosyl)-5-[(5-phospho-beta-D-ribosylamino)methylideneamino]imidazole-4-carboxamide. The protein operates within amino-acid biosynthesis; L-histidine biosynthesis; L-histidine from 5-phospho-alpha-D-ribose 1-diphosphate: step 2/9. It participates in amino-acid biosynthesis; L-histidine biosynthesis; L-histidine from 5-phospho-alpha-D-ribose 1-diphosphate: step 3/9. This is Histidine biosynthesis bifunctional protein HisIE from Xanthomonas campestris pv. campestris (strain ATCC 33913 / DSM 3586 / NCPPB 528 / LMG 568 / P 25).